Consider the following 248-residue polypeptide: 3-deoxy-manno-octulosonate cytidylyltransferase (248 aa).

This sequence belongs to the KdsB family.

The protein localises to the cytoplasm. It catalyses the reaction 3-deoxy-alpha-D-manno-oct-2-ulosonate + CTP = CMP-3-deoxy-beta-D-manno-octulosonate + diphosphate. It functions in the pathway nucleotide-sugar biosynthesis; CMP-3-deoxy-D-manno-octulosonate biosynthesis; CMP-3-deoxy-D-manno-octulosonate from 3-deoxy-D-manno-octulosonate and CTP: step 1/1. It participates in bacterial outer membrane biogenesis; lipopolysaccharide biosynthesis. Functionally, activates KDO (a required 8-carbon sugar) for incorporation into bacterial lipopolysaccharide in Gram-negative bacteria. In Shigella boydii serotype 18 (strain CDC 3083-94 / BS512), this protein is 3-deoxy-manno-octulosonate cytidylyltransferase.